Here is a 141-residue protein sequence, read N- to C-terminus: Large ribosomal subunit protein uL11 (141 aa).

This sequence belongs to the universal ribosomal protein uL11 family. Part of the ribosomal stalk of the 50S ribosomal subunit. Interacts with L10 and the large rRNA to form the base of the stalk. L10 forms an elongated spine to which L12 dimers bind in a sequential fashion forming a multimeric L10(L12)X complex. In terms of processing, one or more lysine residues are methylated.

In terms of biological role, forms part of the ribosomal stalk which helps the ribosome interact with GTP-bound translation factors. The protein is Large ribosomal subunit protein uL11 of Lactobacillus acidophilus (strain ATCC 700396 / NCK56 / N2 / NCFM).